Reading from the N-terminus, the 477-residue chain is MWTALVLVWISSVPLSRSHTVPAVPRHLVTNKWPRAGKQNLSGDAVPRADNTSTLRAATVPPAPVTLTTGTWAATLNSTRVTAETTPHGTNTSTPTTREGTADSVTSRILAAPTSSSPSSVRQTLPTTIAGLPSLSTPRAEVPRTNASVSPRTAIATTVAPHTGTPTTGTVTAVSTVTPASGTVTAAVGTVTPAAGTVTAAVGTVTPAAGTVTAAVGTVTPAAVGTVTAAVGTVTSAAGTINTSDPHARTLSPAKSTPTNTSSRNPIPTSGAQTQGTTIQVTTDQPVHSTAGRPTPSPSNTTLEPNTPKSVASTSSAVVTTTQVQTKEPSASTVPVLPTSMSPEVEATSPTTQPSPLLPTQGTGGPGILLTTEQVGTKATAGTASAGPTSRSSGDVKVPTTASCQLSTQGQYLVVTTDPLTPSLVNKMFLLVVLIVGVTLFIAVLMMFALQAYESYKKKDYTQVDYLINGMYADSEM.

Residues methionine 1–serine 18 form the signal peptide. Topologically, residues histidine 19 to lysine 427 are extracellular. N-linked (GlcNAc...) asparagine glycans are attached at residues asparagine 40, asparagine 51, and asparagine 77. Disordered stretches follow at residues threonine 79 to aspartate 103, glycine 239 to proline 366, and lysine 378 to valine 398. Low complexity predominate over residues threonine 85–threonine 97. Polar residues-rich tracts occupy residues proline 253 to histidine 288 and proline 298 to lysine 309. N-linked (GlcNAc...) asparagine glycosylation is present at asparagine 300. Low complexity-rich tracts occupy residues serine 310–threonine 326, threonine 348–glutamine 361, and lysine 378–serine 393. The chain crosses the membrane as a helical span at residues methionine 428–phenylalanine 448. Topologically, residues alanine 449–methionine 477 are cytoplasmic.

Its subcellular location is the cell membrane. The protein resides in the golgi apparatus. It localises to the trans-Golgi network membrane. This is an uncharacterized protein from Rattus norvegicus (Rat).